The sequence spans 374 residues: MQFQSVGNCAPCKDPCPLKSFCDPGLSNTCNIQPFVNPFGPRRAVATWKVNYLISNRNVLAAHCDPDLINPWGIVIYNNQLWVVCNNTDSITNYDLFGNKLLGTISIRNASHNPSYPTGIAINCGGGFSISTGNISRGGLMLTCSEHGTCHSFNPVVDPLHSFIVLNQQITGEVSVYRGLCIANNTLYLADFFQRHIDVFDQNFNRLIGYPFVDNDGSDPIPLNYGPSNIVNIGCFLYILWAKKDPNITLYAVDEPGAGYISVFNLDGSFVRRFTSRGVLNNPWGMIPAPAECGFPPGSFLVGNHGDGRINIFDCNGRYVGPVLAMTGLPLVIDGIRGLAPHYTDFSEIYFSAACDEMTDGLVGSLVKDQVIYF.

It belongs to the mimivirus R640 family.

The protein localises to the virion. This is an uncharacterized protein from Acanthamoeba polyphaga (Amoeba).